Reading from the N-terminus, the 431-residue chain is MTKSAELFAKAQEKIPGGVNSPVRAFAGVGGSPIFIERADGPLIFDADGKAYIDYVGSWGPMILGHNHAAIREAVISAAQRGLSFGAPTETEINMAELVSELVPSMEQVRMVSSGTEATMSAIRLARGYTGRDKIMKFEGCYHGHADSLLVKAGSGALTLGQPSSPGVPADFAKYTLTATFNNLDSVRELFAANKGEISCIIVEPVAGNMNCIPPVEGFHEGLREICDAEGALLIFDEVMTGFRVAENCAQGYYNIKPDLTCLGKVIGGGMPVGAFGGRKDIMQYIAPTGPVYQAGTLSGNPVAMAAGFACLKVLTEEGNEKRLATTTKQLALGFKELANKHGLPMVVNYVGGMFGFFFTDQETITTYEDVTKCDIERFKRFFNLMLAHGVYLAPSAFEAGFTSLAHGPKEIEATLEAADRCFAKIAAESK.

Position 265 is an N6-(pyridoxal phosphate)lysine (K265).

It belongs to the class-III pyridoxal-phosphate-dependent aminotransferase family. HemL subfamily. As to quaternary structure, homodimer. Requires pyridoxal 5'-phosphate as cofactor.

It is found in the cytoplasm. It carries out the reaction (S)-4-amino-5-oxopentanoate = 5-aminolevulinate. Its pathway is porphyrin-containing compound metabolism; protoporphyrin-IX biosynthesis; 5-aminolevulinate from L-glutamyl-tRNA(Glu): step 2/2. The chain is Glutamate-1-semialdehyde 2,1-aminomutase from Aliivibrio salmonicida (strain LFI1238) (Vibrio salmonicida (strain LFI1238)).